The sequence spans 510 residues: tRNA(Ile)-lysidine synthase (510 aa).

32 to 37 (SGGLDS) lines the ATP pocket.

The protein belongs to the tRNA(Ile)-lysidine synthase family.

It localises to the cytoplasm. It carries out the reaction cytidine(34) in tRNA(Ile2) + L-lysine + ATP = lysidine(34) in tRNA(Ile2) + AMP + diphosphate + H(+). Its function is as follows. Ligates lysine onto the cytidine present at position 34 of the AUA codon-specific tRNA(Ile) that contains the anticodon CAU, in an ATP-dependent manner. Cytidine is converted to lysidine, thus changing the amino acid specificity of the tRNA from methionine to isoleucine. The sequence is that of tRNA(Ile)-lysidine synthase from Blochmanniella pennsylvanica (strain BPEN).